Here is a 528-residue protein sequence, read N- to C-terminus: Butyrophilin subfamily 2 member A2 (528 aa).

The first 29 residues, Met-1–Ala-29, serve as a signal peptide directing secretion. The Extracellular segment spans residues Gln-30–Ala-249. The Ig-like V-type domain occupies Val-31–Ile-142. 3 N-linked (GlcNAc...) asparagine glycosylation sites follow: Asn-47, Asn-115, and Asn-121. Cys-52 and Cys-126 are oxidised to a cystine. The Ig-like C2-type domain maps to Pro-150–Glu-232. Residues Val-250–Ile-270 traverse the membrane as a helical segment. The stretch at Ile-270–Arg-320 forms a coiled coil. The Cytoplasmic segment spans residues Asn-271 to Leu-528. Residues Val-311–Ala-507 form the B30.2/SPRY domain.

Belongs to the immunoglobulin superfamily. BTN/MOG family. Post-translationally, N-glycosylated.

The protein resides in the membrane. Inhibits the proliferation of CD4 and CD8 T-cells activated by anti-CD3 antibodies, T-cell metabolism and IL2 and IFNG secretion. In Pongo abelii (Sumatran orangutan), this protein is Butyrophilin subfamily 2 member A2 (BTN2A2).